The chain runs to 173 residues: Photosystem I assembly protein Ycf3 (173 aa).

TPR repeat units follow at residues 35–68, 72–105, and 120–153; these read AYIY…EENK, GETL…NPKQ, and GRYA…YPGG.

It belongs to the Ycf3 family.

It localises to the cellular thylakoid membrane. In terms of biological role, essential for the assembly of the photosystem I (PSI) complex. May act as a chaperone-like factor to guide the assembly of the PSI subunits. The polypeptide is Photosystem I assembly protein Ycf3 (Prochlorococcus marinus (strain MIT 9215)).